Reading from the N-terminus, the 394-residue chain is Deoxyguanosinetriphosphate triphosphohydrolase-like protein (394 aa).

A disordered region spans residues 1 to 36 (MSQAPYFVPRAPYAEDPSKSKGRRFKEDESRTRTPF). Basic and acidic residues predominate over residues 25–36 (FKEDESRTRTPF). The 141-residue stretch at 70–210 (RLTHTLEVAQ…AALADDIAYN (141 aa)) folds into the HD domain.

It belongs to the dGTPase family. Type 2 subfamily.

The polypeptide is Deoxyguanosinetriphosphate triphosphohydrolase-like protein (Caulobacter vibrioides (strain ATCC 19089 / CIP 103742 / CB 15) (Caulobacter crescentus)).